Here is a 254-residue protein sequence, read N- to C-terminus: Major prion protein (254 aa).

The first 22 residues, 1-22, serve as a signal peptide directing secretion; it reads MANLGYWLLALFVATWTDVGLC. An interaction with GRB2, ERI3 and SYN1 region spans residues 23-231; the sequence is KKRPKPGGWN…SQAYYDGRRS (209 aa). The tract at residues 25–107 is disordered; that stretch reads RPKPGGWNTG…QWNKPSKPKT (83 aa). 5 repeat units span residues 51 to 59, 60 to 67, 68 to 75, 76 to 83, and 84 to 91. Residues 51–91 are 5 X 8 AA tandem repeats of P-H-G-G-G-W-G-Q; the sequence is PQGGGTWGQPHGGGWGQPHGGGWGQPHGGGWGQPHGGGWGQ. A compositionally biased stretch (gly residues) spans 52 to 95; the sequence is QGGGTWGQPHGGGWGQPHGGGWGQPHGGGWGQPHGGGWGQGGGT. The Cu(2+) site is built by histidine 61, glycine 62, glycine 63, histidine 69, glycine 70, glycine 71, histidine 77, glycine 78, glycine 79, histidine 85, glycine 86, and glycine 87. Cysteine 179 and cysteine 214 are disulfide-bonded. N-linked (GlcNAc...) asparagine glycans are attached at residues asparagine 181 and asparagine 197. A lipid anchor (GPI-anchor amidated serine) is attached at serine 231. Positions 232–254 are cleaved as a propeptide — removed in mature form; it reads SAVLFSSPPMILLISFLIFLIVG.

It belongs to the prion family. As to quaternary structure, monomer and homodimer. Has a tendency to aggregate into amyloid fibrils containing a cross-beta spine, formed by a steric zipper of superposed beta-strands. Soluble oligomers may represent an intermediate stage on the path to fibril formation. Copper binding may promote oligomerization. Interacts with GRB2, APP, ERI3/PRNPIP and SYN1. Mislocalized cytosolically exposed PrP interacts with MGRN1; this interaction alters MGRN1 subcellular location and causes lysosomal enlargement. Interacts with KIAA1191.

It is found in the cell membrane. The protein resides in the golgi apparatus. Its function is as follows. Its primary physiological function is unclear. Has cytoprotective activity against internal or environmental stresses. May play a role in neuronal development and synaptic plasticity. May be required for neuronal myelin sheath maintenance. May play a role in iron uptake and iron homeostasis. Soluble oligomers are toxic to cultured neuroblastoma cells and induce apoptosis (in vitro). Association with GPC1 (via its heparan sulfate chains) targets PRNP to lipid rafts. Also provides Cu(2+) or Zn(2+) for the ascorbate-mediated GPC1 deaminase degradation of its heparan sulfate side chains. The sequence is that of Major prion protein (PRNP) from Sigmodon hispidus (Hispid cotton rat).